The chain runs to 310 residues: Olfactory receptor 5AR1 (310 aa).

Over 1–28 (MDKENSSMVTEFIFMGITQDPQMEIIFF) the chain is Extracellular. A glycan (N-linked (GlcNAc...) asparagine) is linked at Asn5. The helical transmembrane segment at 29 to 49 (VVFLIVYLVNVVGNIGMIILI) threads the bilayer. The Cytoplasmic segment spans residues 50 to 58 (TTDTQLHTP). A helical membrane pass occupies residues 59 to 79 (MYFFLCNLSFVDLGYSSAIAP). Residues 80–100 (RMLADFLTNHKVISFSSCATQ) lie on the Extracellular side of the membrane. An intrachain disulfide couples Cys97 to Cys189. Residues 101–120 (FAFFVGFVDAECYVLAAMAY) traverse the membrane as a helical segment. Topologically, residues 121–139 (GRFVAICRPLHYSTFMSKQ) are cytoplasmic. Residues 140–160 (VCLALMLGSYLAGLVSLVAHT) form a helical membrane-spanning segment. Residues 161-205 (TLTFSLSYCGSNIINHFFCEIPPLLALSCSDTYISEILLFSLCGF) are Extracellular-facing. A helical transmembrane segment spans residues 206 to 226 (IEFSTILIIFISYTFILVAII). The Cytoplasmic portion of the chain corresponds to 227-239 (RMRSAEGRLKAFS). The chain crosses the membrane as a helical span at residues 240–260 (TCGSHLTGITLFYGTVMFMYL). Residues 261–271 (RPTSSYSLDQD) lie on the Extracellular side of the membrane. A helical transmembrane segment spans residues 272–292 (KWASVFYTVIIPMLNPLIYSL). Topologically, residues 293 to 310 (RNKDVKAAFKKLIGKKSQ) are cytoplasmic.

The protein belongs to the G-protein coupled receptor 1 family.

The protein resides in the cell membrane. Odorant receptor. In Homo sapiens (Human), this protein is Olfactory receptor 5AR1.